Reading from the N-terminus, the 297-residue chain is UTP--glucose-1-phosphate uridylyltransferase (297 aa).

The protein belongs to the UDPGP type 2 family.

It carries out the reaction alpha-D-glucose 1-phosphate + UTP + H(+) = UDP-alpha-D-glucose + diphosphate. Its pathway is carbohydrate metabolism; nucleotide-sugar metabolism. The protein operates within bacterial outer membrane biogenesis; lipopolysaccharide biosynthesis. In terms of biological role, may play a role in stationary phase survival. This chain is UTP--glucose-1-phosphate uridylyltransferase (galF), found in Salmonella typhimurium (strain LT2 / SGSC1412 / ATCC 700720).